Consider the following 166-residue polypeptide: Regulatory protein RecX (166 aa).

It belongs to the RecX family.

It localises to the cytoplasm. Modulates RecA activity. The chain is Regulatory protein RecX from Escherichia fergusonii (strain ATCC 35469 / DSM 13698 / CCUG 18766 / IAM 14443 / JCM 21226 / LMG 7866 / NBRC 102419 / NCTC 12128 / CDC 0568-73).